We begin with the raw amino-acid sequence, 302 residues long: Adipolin (302 aa).

The N-terminal stretch at 1 to 20 is a signal peptide; the sequence is MRRWAWAAVVVLLGPQLVLL. 2 disordered regions span residues 28-68 and 86-110; these read EAQR…GPEF and ALRK…PPGA. Asparagine 43 carries an N-linked (GlcNAc...) asparagine glycan. Over residues 86–100 the composition is skewed to basic and acidic residues; that stretch reads ALRKRCGSRDKKPRD. The C1q domain maps to 147–302; sequence LRLVGEAFHC…SSFSGLLLGT (156 aa).

This sequence belongs to the adipolin/erythroferrone family. Homomultimer; disulfide-linked. May interact with ERFE. Processed into Adipolin fC1QTNF12 and Adipolin gC1QTNF12 by FURIN. Insulin enhances endogenous C1QTNF12 cleavage. As to expression, predominantly expressed by adipose tissues.

It is found in the secreted. Its function is as follows. Insulin-sensitizing adipocyte-secreted protein (adipokine) that regulates glucose metabolism in liver and adipose tissue. Promotes glucose uptake in adipocytes and suppresses de novo glucose production in hepatocytes via the PI3K-Akt signaling pathway. Administration lead to reduction of blood glucose. Able to attenuate inflammation in fat tissue. The polypeptide is Adipolin (Homo sapiens (Human)).